Reading from the N-terminus, the 288-residue chain is Peptidyl-tRNA hydrolase, chloroplastic (288 aa).

Residues 1–55 (MKAVAFPAKIANLSFPSNCCSLFFRSPATFLSPALPCRKLTKGIRGLEGLMSQCL) constitute a chloroplast transit peptide. Tyr107 is a tRNA binding site. Catalysis depends on His112, which acts as the Proton acceptor. Residues Phe157, Asn159, and Asn205 each contribute to the tRNA site.

Belongs to the PTH family. As to quaternary structure, monomer.

Its subcellular location is the plastid. It is found in the chloroplast stroma. It carries out the reaction an N-acyl-L-alpha-aminoacyl-tRNA + H2O = an N-acyl-L-amino acid + a tRNA + H(+). Functionally, the natural substrate for this enzyme may be peptidyl-tRNAs which drop off the ribosome during protein synthesis. The chain is Peptidyl-tRNA hydrolase, chloroplastic from Arabidopsis thaliana (Mouse-ear cress).